Consider the following 771-residue polypeptide: DNA helicase/primase complex-associated protein (771 aa).

The protein belongs to the herpesviridae HEPA family. As to quaternary structure, associates with the primase and the helicase to form the helicase-primase complex. Interacts with the origin-binding protein. Interacts with the polymerase catalytic subunit.

The protein localises to the host nucleus. Its function is as follows. Component of the helicase/primase complex. Unwinds the DNA at the replication forks and generates single-stranded DNA for both leading and lagging strand synthesis. The primase synthesizes short RNA primers on the lagging strand that the polymerase presumably elongates using dNTPs. The primase-associated factor has no known catalytic activity in the complex and may serve to facilitate the formation of the replisome by directly interacting with the origin-binding protein and the polymerase. This chain is DNA helicase/primase complex-associated protein, found in Varicella-zoster virus (strain Oka vaccine) (HHV-3).